Reading from the N-terminus, the 330-residue chain is PDZ and LIM domain protein 4 (330 aa).

A PDZ domain is found at 1–84 (MTHSVTLRGP…HLTLSVSRPE (84 aa)). 2 disordered regions span residues 104 to 153 (DPES…SNEA) and 219 to 242 (EAGE…ASKL). Ser107, Ser111, Ser115, Ser118, Ser119, Ser124, and Ser134 each carry phosphoserine. Residues 108 to 122 (QDCSPATSRRSSVSG) are compositionally biased toward polar residues. The LIM zinc-binding domain occupies 255–305 (CTRCGHGIVGTIVKARDKLYHPECFMCSDCGLNLKQRGYFFLDERLYCENH).

Homodimer. Interacts (via C-terminus only or via combined C-terminus and LIM domain, but not LIM domain only) with PTPN13 (via the second or fourth PDZ domains). Found in a complex with PTPN13 and TRIP6. Interacts (via PDZ domain) with ACTN1 and ACTN2 (via C-terminal SDL residues). Interacts (via PDZ domain) with TRIP6 (via the second LIM domain or via the third LIM domain plus C-terminus). Interacts (via LIM domain) with GRIA1 (via C-terminus); this interaction as well as the interaction with alpha-actinin is required for their colocalization in early endosomes. Interacts with PDLIM1. Forms (via LIM domain) a heterodimer with PDLIM3. Interacts directly with SRC (via kinase domain and to a lesser extent the SH2 domain). In terms of processing, phosphorylated on tyrosine residue(s). Can be dephosphorylated by PTPN13. Expressed in several non-muscle tissues including lung, brain, ovary and uterus, and especially in epithelial cells at 14 dpc. In the uterus, high expression in the glandular epithelium, but absent in the simple columnar epithelium lining the uterus cavity.

The protein localises to the cytoplasm. It is found in the cytoskeleton. The protein resides in the cell projection. Its subcellular location is the dendritic spine. It localises to the early endosome membrane. The protein localises to the recycling endosome membrane. It is found in the nucleus. The protein resides in the perinuclear region. Its subcellular location is the lamellipodium. It localises to the synapse. The protein localises to the synaptosome. Functionally, suppresses SRC activation by recognizing and binding to active SRC and facilitating PTPN13-mediated dephosphorylation of SRC 'Tyr-419' leading to its inactivation. Inactivated SRC dissociates from this protein allowing the initiation of a new SRC inactivation cycle. Involved in reorganization of the actin cytoskeleton. In nonmuscle cells, binds to ACTN1 (alpha-actinin-1), increases the affinity of ACTN1 to F-actin (filamentous actin), and promotes formation of actin stress fibers. Involved in regulation of the synaptic AMPA receptor transport in dendritic spines of hippocampal pyramidal neurons directing the receptors toward an insertion at the postsynaptic membrane. Links endosomal surface-internalized GRIA1-containing AMPA receptors to the alpha-actinin/actin cytoskeleton. Increases AMPA receptor-mediated excitatory postsynaptic currents in neurons. This Mus musculus (Mouse) protein is PDZ and LIM domain protein 4 (Pdlim4).